The following is a 284-amino-acid chain: MLSKQIPLGIYEKALPAGECWLERLRLAKTLGFDFVEMSVDETDERLSRLDWSREQRLALVNAIVETGVRVPSMCLSAHRRFPLGSEDDAVRAQGLEIMRKAIQFAQDVGIRVIQLAGYDVYYQEANNETRRHFRDGLKESVEMASRAQVTLAMEIMDYPLMNSISKALGYAHYLNNPWFQLYPDIGNLSAWDNDVQMELQAGIGHIVAVHVKDTKPGVFKNVPFGEGVVDFERCFETLKQSGYCGPYLIEMWSETAEDPAAEVVKARDWVKARMAKAGMVEAA.

The protein belongs to the L-ribulose-5-phosphate 3-epimerase family.

It catalyses the reaction L-ribulose 5-phosphate = L-xylulose 5-phosphate. The protein operates within cofactor degradation; L-ascorbate degradation; D-xylulose 5-phosphate from L-ascorbate: step 3/4. In terms of biological role, catalyzes the isomerization of L-xylulose-5-phosphate to L-ribulose-5-phosphate. Is involved in the anaerobic L-ascorbate utilization. This chain is L-ribulose-5-phosphate 3-epimerase UlaE, found in Shigella boydii serotype 18 (strain CDC 3083-94 / BS512).